Here is a 331-residue protein sequence, read N- to C-terminus: Fructose-1,6-bisphosphatase class 1 (331 aa).

Mg(2+)-binding residues include Glu-88, Asp-108, Leu-110, and Asp-111. Residues 111–114 (DGSS) and Asn-201 each bind substrate. Glu-273 contributes to the Mg(2+) binding site.

This sequence belongs to the FBPase class 1 family. As to quaternary structure, homotetramer. The cofactor is Mg(2+).

Its subcellular location is the cytoplasm. The enzyme catalyses beta-D-fructose 1,6-bisphosphate + H2O = beta-D-fructose 6-phosphate + phosphate. It functions in the pathway carbohydrate biosynthesis; gluconeogenesis. In Methylobacillus flagellatus (strain ATCC 51484 / DSM 6875 / VKM B-1610 / KT), this protein is Fructose-1,6-bisphosphatase class 1.